The chain runs to 61 residues: Bacteriocin mesentericin Y105 (61 aa).

The signal sequence occupies residues 1 to 24 (MTNMKSVEAYQQLDNQNLKKVVGG). A disulfide bridge links Cys33 with Cys38.

It belongs to the bacteriocin class IIA/YGNGV family.

The protein resides in the secreted. Its function is as follows. Bacteriocin active against Listeria monocytogenes. The protein is Bacteriocin mesentericin Y105 (mesY) of Leuconostoc mesenteroides.